The chain runs to 120 residues: Large ribosomal subunit protein uL22 (120 aa).

It belongs to the universal ribosomal protein uL22 family. As to quaternary structure, part of the 50S ribosomal subunit.

Its function is as follows. This protein binds specifically to 23S rRNA; its binding is stimulated by other ribosomal proteins, e.g. L4, L17, and L20. It is important during the early stages of 50S assembly. It makes multiple contacts with different domains of the 23S rRNA in the assembled 50S subunit and ribosome. In terms of biological role, the globular domain of the protein is located near the polypeptide exit tunnel on the outside of the subunit, while an extended beta-hairpin is found that lines the wall of the exit tunnel in the center of the 70S ribosome. This is Large ribosomal subunit protein uL22 from Acaryochloris marina (strain MBIC 11017).